A 588-amino-acid chain; its full sequence is Adenine deaminase (588 aa).

The protein belongs to the metallo-dependent hydrolases superfamily. Adenine deaminase family. In terms of assembly, homodimer. Mn(2+) is required as a cofactor.

It carries out the reaction adenine + H2O + H(+) = hypoxanthine + NH4(+). This Escherichia coli O139:H28 (strain E24377A / ETEC) protein is Adenine deaminase.